A 349-amino-acid chain; its full sequence is Anthranilate phosphoribosyltransferase (349 aa).

Residues G82, 85–86 (GD), T90, 92–95 (NVST), 110–118 (KHGNRSVSS), and G122 each bind 5-phospho-alpha-D-ribose 1-diphosphate. Anthranilate is bound at residue G82. Residue S94 coordinates Mg(2+). Position 113 (N113) interacts with anthranilate. Anthranilate is bound at residue R168. Mg(2+) is bound by residues D232 and E233.

The protein belongs to the anthranilate phosphoribosyltransferase family. In terms of assembly, homodimer. Requires Mg(2+) as cofactor.

It carries out the reaction N-(5-phospho-beta-D-ribosyl)anthranilate + diphosphate = 5-phospho-alpha-D-ribose 1-diphosphate + anthranilate. The protein operates within amino-acid biosynthesis; L-tryptophan biosynthesis; L-tryptophan from chorismate: step 2/5. In terms of biological role, catalyzes the transfer of the phosphoribosyl group of 5-phosphorylribose-1-pyrophosphate (PRPP) to anthranilate to yield N-(5'-phosphoribosyl)-anthranilate (PRA). In Methanosphaera stadtmanae (strain ATCC 43021 / DSM 3091 / JCM 11832 / MCB-3), this protein is Anthranilate phosphoribosyltransferase.